Reading from the N-terminus, the 78-residue chain is Large ribosomal subunit protein bL28 (78 aa).

Belongs to the bacterial ribosomal protein bL28 family.

The chain is Large ribosomal subunit protein bL28 from Azoarcus sp. (strain BH72).